The chain runs to 237 residues: Histone H1E (237 aa).

Residues 1-21 (MSDPAQEVEAPVEAAPVASSP) show a composition bias toward low complexity. Disordered stretches follow at residues 1–56 (MSDP…PVSE) and 109–237 (LQAK…KKAK). Over residues 26–42 (EKAPKAPKAEKPKSDKP) the composition is skewed to basic and acidic residues. Positions 50–124 (THPPVSEMVV…GASGSFKLPP (75 aa)) constitute an H15 domain. Residues 182 to 195 (AKPAAKKAAAPKPK) show a composition bias toward low complexity. Basic and acidic residues predominate over residues 200–209 (PKKEVKPKKE). The span at 210–237 (AKPKKAAAKPAKKPAAKPAKKPAAKKAK) shows a compositional bias: basic residues.

The protein belongs to the histone H1/H5 family.

The protein localises to the nucleus. It is found in the chromosome. Its function is as follows. Histones H1 are necessary for the condensation of nucleosome chains into higher-order structures. This Chironomus tentans (Midge) protein is Histone H1E.